Reading from the N-terminus, the 397-residue chain is Elongation factor Tu 1 (397 aa).

In terms of domain architecture, tr-type G spans 10–207 (KPHVNVGTIG…TLDSYIPEPV (198 aa)). A G1 region spans residues 19-26 (GHVDHGKT). Residue 19–26 (GHVDHGKT) coordinates GTP. Mg(2+) is bound at residue Thr26. Residues 60–64 (GITIN) are G2. A G3 region spans residues 81-84 (DCPG). GTP is bound by residues 81–85 (DCPGH) and 136–139 (NKAD). A G4 region spans residues 136–139 (NKAD). The segment at 174-176 (SAL) is G5.

This sequence belongs to the TRAFAC class translation factor GTPase superfamily. Classic translation factor GTPase family. EF-Tu/EF-1A subfamily. In terms of assembly, monomer.

The protein localises to the cytoplasm. It carries out the reaction GTP + H2O = GDP + phosphate + H(+). In terms of biological role, GTP hydrolase that promotes the GTP-dependent binding of aminoacyl-tRNA to the A-site of ribosomes during protein biosynthesis. The protein is Elongation factor Tu 1 of Stutzerimonas stutzeri (strain A1501) (Pseudomonas stutzeri).